A 717-amino-acid chain; its full sequence is MEELDRSRAFARDVKRIVVKVGTAVVTGKGGRLALGRLGALCEQLAELNSDGFEVILVSSGAVGLGRQRLRYRQLVNSSFADLQKPQTELDGKACAGVGQSSLMAYYETMFDQLDVTAAQLLVNDSSFRDKDFRKQLNETVKSMLDLRVIPIFNENDAISTRRAPYQDSSGIFWDNDSLAALLALELKADLLILLSDVEGLYTGPPSDPNSKLIHTFVKEKHQDEITFGDKSRLGRGGMTAKVKAAVNAAYAGIPVIITSGYSAENIDKVLRGLRVGTLFHQDARLWAPITDSNARDMAVAARESSRKLQALSSEDRKKILLDIADALEANVTTIKAENELDVASAQEAGLEESMVARLVMTPGKISSLAASVRKLADMEDPIGRVLKKTEVADGLVLEKTSSPLGVLLIVFESRPDALVQIASLAIRSGNGLLLKGGKEARRSNAILHKVITDAIPETVGGKLIGLVTSREEIPDLLKLDDVIDLVIPRGSNKLVTQIKNTTKIPVLGHADGICHVYVDKACDTDMAKRIVSDAKLDYPAACNAMETLLVHKDLEQNAVLNELIFALQSNGVTLYGGPRASKILNIPEARSFNHEYCAKACTVEVVEDVYGAIDHIHRHGSAHTDCIVTEDHEVAELFLRQVDSAAVFHNASTRFSDGFRFGLGAEVGVSTGRIHARGPVGVEGLLTTRWIMRGKGQVVDGDNGIVYTHQDIPIQA.

The tract at residues 1-296 is glutamate 5-kinase; it reads MEELDRSRAF…WAPITDSNAR (296 aa). Residues Ser-60, Asp-157, and Asn-176 each coordinate substrate. ATP is bound by residues 196–197 and 236–242; these read SD and RGGMTAK. Residues 297 to 717 form a gamma-glutamyl phosphate reductase region; that stretch reads DMAVAARESS…YTHQDIPIQA (421 aa).

It in the N-terminal section; belongs to the glutamate 5-kinase family. The protein in the C-terminal section; belongs to the gamma-glutamyl phosphate reductase family.

It catalyses the reaction L-glutamate + ATP = L-glutamyl 5-phosphate + ADP. It carries out the reaction L-glutamate 5-semialdehyde + phosphate + NADP(+) = L-glutamyl 5-phosphate + NADPH + H(+). The protein operates within amino-acid biosynthesis; L-proline biosynthesis; L-glutamate 5-semialdehyde from L-glutamate: step 1/2. It participates in amino-acid biosynthesis; L-proline biosynthesis; L-glutamate 5-semialdehyde from L-glutamate: step 2/2. In terms of biological role, P5CS plays a key role in proline biosynthesis, leading to osmoregulation in plants. The sequence is that of Delta-1-pyrroline-5-carboxylate synthase A (P5CSA) from Arabidopsis thaliana (Mouse-ear cress).